A 382-amino-acid chain; its full sequence is Proton extrusion protein PxcA (382 aa).

A run of 4 helical transmembrane segments spans residues T156–V176, A257–F277, I305–L325, and F340–I360.

This sequence belongs to the CemA family.

Its subcellular location is the cell inner membrane. Its function is as follows. Required for H(+) efflux immediately after light irradiation to form a rapid H(+) concentration gradient across the thylakoid membranes. Together with PxcL, contributes to transient H(+) uptake following dark to light transition. The protein is Proton extrusion protein PxcA of Synechococcus sp. (strain CC9311).